Reading from the N-terminus, the 421-residue chain is Protein HOMOLOG OF MAMMALIAN LYST-INTERACTING PROTEIN 5 (421 aa).

Ser2 is modified (N-acetylserine). Residues Ile146–Pro374 are disordered. Polar residues predominate over residues Ser165–Thr185. Residues His188–Phe207 show a composition bias toward basic and acidic residues. Over residues Leu245–His258 the composition is skewed to pro residues. Polar residues predominate over residues Asn278–Gln293. Composition is skewed to low complexity over residues Ser294–Pro308 and Pro317–Ser337.

Belongs to the VTA1 family. Homodimer. Interacts with SKD1/VPS4, VPS60-1, CHMP1A and CHMP1B. Binds to PROS/At4g24370. Interacts with MPK6 and MPK3. Post-translationally, phosphorylated by activated MPK6 and MPK3, this activation is required to trigger multivesicular bodies (MVBs) trafficking upon plant infection.

It localises to the cytoplasm. It is found in the endosome membrane. The protein resides in the nucleus. The protein localises to the endosome. Its subcellular location is the multivesicular body. In terms of biological role, involved in the endosomal multivesicular bodies (MVB) pathway. MVBs contain intraluminal vesicles (ILVs) that are generated by invagination and scission from the limiting membrane of the endosome and are delivered to lysosomes enabling degradation of membrane proteins. Thought to be a cofactor of SKD1/VPS4, which catalyzes the disassembly of membrane-associated ESCRT-III. Target of pathogen-responsive mitogen-activated protein kinases (MPKs) that plays a critical role in plant basal resistance to Pseudomonas syringae in a SKD1-dependent manner by promoting multivesicular bodies (MVBs) trafficking upon plant infection. The polypeptide is Protein HOMOLOG OF MAMMALIAN LYST-INTERACTING PROTEIN 5 (Arabidopsis thaliana (Mouse-ear cress)).